Reading from the N-terminus, the 211-residue chain is Ras-related protein RABB1b (211 aa).

13 to 20 (GDTGVGKS) is a GTP binding site. The Effector region motif lies at 35–43 (HDLTIGVEF). Residues 61–65 (DTAGQ), 119–122 (NKCD), and 149–150 (SA) each bind GTP. S-geranylgeranyl cysteine attachment occurs at residues cysteine 209 and cysteine 210.

This sequence belongs to the small GTPase superfamily. Rab family.

The protein localises to the cell membrane. Its function is as follows. Intracellular vesicle trafficking and protein transport. The polypeptide is Ras-related protein RABB1b (RABB1B) (Arabidopsis thaliana (Mouse-ear cress)).